A 314-amino-acid polypeptide reads, in one-letter code: Testis-specific Y-encoded protein 4 (314 aa).

Belongs to the nucleosome assembly protein (NAP) family.

Its subcellular location is the cytoplasm. The protein resides in the nucleus. May be involved in sperm differentiation and proliferation. The protein is Testis-specific Y-encoded protein 4 (TSPY4) of Homo sapiens (Human).